Reading from the N-terminus, the 701-residue chain is Elongation factor G 1 (701 aa).

The region spanning V8–T290 is the tr-type G domain. Residues A17 to T24, D88 to H92, and N142 to D145 contribute to the GTP site.

This sequence belongs to the TRAFAC class translation factor GTPase superfamily. Classic translation factor GTPase family. EF-G/EF-2 subfamily.

Its subcellular location is the cytoplasm. Catalyzes the GTP-dependent ribosomal translocation step during translation elongation. During this step, the ribosome changes from the pre-translocational (PRE) to the post-translocational (POST) state as the newly formed A-site-bound peptidyl-tRNA and P-site-bound deacylated tRNA move to the P and E sites, respectively. Catalyzes the coordinated movement of the two tRNA molecules, the mRNA and conformational changes in the ribosome. The polypeptide is Elongation factor G 1 (Saccharophagus degradans (strain 2-40 / ATCC 43961 / DSM 17024)).